The sequence spans 656 residues: MCLQNLLSILCFVLAISFGYVSAQKCVDSMFFRPNGTYDTNRHLILSNLASNVSSRDGYYNGSVGEGPDRIYALGLCIPGTDPKVCDDCMQIASTGILQNCPNQTDSYDWRSQKTLCFVRYSNSSFFNKMDLEPTMVIGDLNSGLFQGDLAAYTRTWEEFMNSMITRVGRTRYLADISPRIGSARIYALMQCIRGISSMECETCIRDNVRMYQSCCNGFIGGTIRKPVCFFRWDGSEYLGAFGDTPSLPPPSPDGKTISTGAIVAVVVSVVIFVVLLALVLVIRKRRQSYKTLKPKTDDDMTSPQSLQFDFMTLEAATDKFSRNNKLGKGGFGEVYKGMLPNETEVAVKRLSSNSGQGTQEFKNEVVIVAKLQHKNLVRLLGFCLERDEQILVYEFVPNKSLNYFLFGNKQKHLLDPTKKSQLDWKRRYNIIGGITRGLLYLHQDSRLTIIHRDIKASNILLDADMNPKIADFGMARNFRVDQTEDNTRRVVGTFGYMPPEYVTHGQFSTKSDVYSFGVLILEIVCGKKNSSFYKIDDSGGNLVTHVWRLWNNDSPLDLIDPAIEESCDNDKVIRCIHIGLLCVQETPVDRPEMSTIFQMLTNSSITLPVPRPPGFFFRNRSNLDPLTYGSELGQSSSKSIPYTIDSASITRVTPR.

The first 23 residues, methionine 1–alanine 23, serve as a signal peptide directing secretion. Gnk2-homologous domains are found at residues glutamine 24 to phenylalanine 126 and proline 134 to tyrosine 238. Topologically, residues glutamine 24–alanine 262 are extracellular. N-linked (GlcNAc...) asparagine glycosylation is found at asparagine 35, asparagine 52, asparagine 61, asparagine 103, and asparagine 123. Residues isoleucine 263 to isoleucine 283 traverse the membrane as a helical segment. Residues arginine 284 to arginine 656 lie on the Cytoplasmic side of the membrane. Residues phenylalanine 321–isoleucine 606 form the Protein kinase domain. ATP-binding positions include leucine 327 to valine 335 and lysine 349. At tyrosine 394 the chain carries Phosphotyrosine. Residue aspartate 454 is the Proton acceptor of the active site. Serine 458 carries the post-translational modification Phosphoserine. Threonine 494 carries the post-translational modification Phosphothreonine. Tyrosine 502 carries the phosphotyrosine modification.

It belongs to the protein kinase superfamily. Ser/Thr protein kinase family. CRK subfamily.

It localises to the membrane. It carries out the reaction L-seryl-[protein] + ATP = O-phospho-L-seryl-[protein] + ADP + H(+). The catalysed reaction is L-threonyl-[protein] + ATP = O-phospho-L-threonyl-[protein] + ADP + H(+). The sequence is that of Putative cysteine-rich receptor-like protein kinase 32 (CRK32) from Arabidopsis thaliana (Mouse-ear cress).